The following is a 230-amino-acid chain: Protein-L-isoaspartate O-methyltransferase (230 aa).

Residue serine 68 is part of the active site.

This sequence belongs to the methyltransferase superfamily. L-isoaspartyl/D-aspartyl protein methyltransferase family.

It is found in the cytoplasm. It catalyses the reaction [protein]-L-isoaspartate + S-adenosyl-L-methionine = [protein]-L-isoaspartate alpha-methyl ester + S-adenosyl-L-homocysteine. Functionally, catalyzes the methyl esterification of L-isoaspartyl residues in peptides and proteins that result from spontaneous decomposition of normal L-aspartyl and L-asparaginyl residues. It plays a role in the repair and/or degradation of damaged proteins. This Salinibacter ruber (strain DSM 13855 / M31) protein is Protein-L-isoaspartate O-methyltransferase.